The sequence spans 316 residues: MAIYADNSYSIGNTPLVRLKHFGHNGNVVVKIEGRNPSYSVKCRIGANMVWQAEKDGTLTKGKEIVDATSGNTGIALAYVAAARGYKITLTMPETMSLERKRLLCGLGVNLVLTEGAKGMKGAIAKAEEIVASDPSRYVMLKQFENPANPQIHRETTGPEIWKDTDGKVDVVVAGVGTGGSITGISRAIKLDFGKQITSVAVEPVESPVISQTLAGEEVKPGPHKIQGIGAGFIPKNLDLSIIDRVETVDSDTALATARRLMAEEGILAGISSGAAVAAADRLAKLPEFADKLIVVILPSASERYLSTALFEGIEG.

Positions 7 and 35 each coordinate hydrogen sulfide. K42 carries the N6-(pyridoxal phosphate)lysine modification. Pyridoxal 5'-phosphate-binding positions include N72 and 177 to 181 (GTGGS). L268 is a binding site for hydrogen sulfide. Residue S272 participates in pyridoxal 5'-phosphate binding.

This sequence belongs to the cysteine synthase/cystathionine beta-synthase family. In terms of assembly, homodimer. Pyridoxal 5'-phosphate serves as cofactor.

It carries out the reaction O-acetyl-L-serine + hydrogen sulfide = L-cysteine + acetate. It functions in the pathway amino-acid biosynthesis; L-cysteine biosynthesis; L-cysteine from L-serine: step 2/2. The chain is Cysteine synthase (cysK) from Haemophilus influenzae (strain ATCC 51907 / DSM 11121 / KW20 / Rd).